The following is a 137-amino-acid chain: Small ribosomal subunit protein bS16 (137 aa).

2 stretches are compositionally biased toward basic and acidic residues: residues 80 to 99 (KSPE…KRLQ) and 111 to 125 (VATE…KEAP). The interval 80-137 (KSPEEAQKGGMRKGEFKRLQAEQAAKAQKKAVATEEPKAEEAKEAPPAESQAAEGKEE) is disordered. Over residues 126–137 (PAESQAAEGKEE) the composition is skewed to low complexity.

It belongs to the bacterial ribosomal protein bS16 family.

This is Small ribosomal subunit protein bS16 from Coxiella burnetii (strain Dugway 5J108-111).